A 265-amino-acid polypeptide reads, in one-letter code: Type-1Ba cytolytic delta-endotoxin (265 aa).

Belongs to the cyt1/cyt2 endotoxin family. Post-translationally, active after proteolytic processing.

Functionally, kills the larvae of dipteran insects by making pores in the epithelial cell membrane of the insect midgut. The sequence is that of Type-1Ba cytolytic delta-endotoxin (cyt1Ba1) from Bacillus thuringiensis subsp. neoleoensis.